The primary structure comprises 342 residues: MATH domain and coiled-coil domain-containing protein At3g44800 (342 aa).

In terms of domain architecture, MATH spans 3-129 (YEKFTWVIKN…NNEVKIVAEV (127 aa)). Residues 253–327 (KVDWLERKLE…ALLEKEKGKV (75 aa)) are a coiled coil.

The protein is MATH domain and coiled-coil domain-containing protein At3g44800 of Arabidopsis thaliana (Mouse-ear cress).